A 624-amino-acid chain; its full sequence is E3 ubiquitin-protein ligase RLIM (624 aa).

Met-1 carries the N-acetylmethionine modification. A compositionally biased stretch (basic and acidic residues) spans Met-1–Ser-11. Disordered regions lie at residues Met-1–Arg-25, Lys-72–Phe-251, Asn-257–Ser-276, Thr-291–Phe-363, and Ser-424–Glu-522. Residues Ser-104–Ser-132 are compositionally biased toward polar residues. Over residues Asn-142–Glu-153 the composition is skewed to low complexity. Ser-164 bears the Phosphoserine mark. Residues Gly-165 to Pro-188 show a composition bias toward polar residues. Ser-195, Ser-228, Ser-230, and Ser-276 each carry phosphoserine. Basic and acidic residues predominate over residues Arg-214 to Arg-229. The segment covering Thr-291–Arg-315 has biased composition (polar residues). The span at Arg-329–Ile-339 shows a compositional bias: basic and acidic residues. Residues Ala-340–Tyr-356 show a composition bias toward polar residues. Positions Gly-445–Ser-454 are enriched in gly residues. A compositionally biased stretch (low complexity) spans Ser-455 to Gly-507. The RING-type zinc-finger motif lies at Cys-570–Arg-611. Residues Glu-621–Val-624 carry the PDZ-binding motif.

The protein belongs to the RNF12 family. Interacts with LIM/homeobox factors such as LHX3. Interacts with LDB1, LDB2 and SIN3A. Interacts with LIMK1. Interacts (via N-terminus) with TERF1. Interacts (via C-terminus) with ESR1. As to expression, expressed in many tissues.

The protein resides in the nucleus. It carries out the reaction S-ubiquitinyl-[E2 ubiquitin-conjugating enzyme]-L-cysteine + [acceptor protein]-L-lysine = [E2 ubiquitin-conjugating enzyme]-L-cysteine + N(6)-ubiquitinyl-[acceptor protein]-L-lysine.. Its pathway is protein modification; protein ubiquitination. Its function is as follows. E3 ubiquitin-protein ligase. Acts as a negative coregulator for LIM homeodomain transcription factors by mediating the ubiquitination and subsequent degradation of LIM cofactors LDB1 and LDB2 and by mediating the recruitment the SIN3a/histone deacetylase corepressor complex. Ubiquitination and degradation of LIM cofactors LDB1 and LDB2 allows DNA-bound LIM homeodomain transcription factors to interact with other protein partners such as RLIM. Plays a role in telomere length-mediated growth suppression by mediating the ubiquitination and degradation of TERF1. By targeting ZFP42 for degradation, acts as an activator of random inactivation of X chromosome in the embryo, a stochastic process in which one X chromosome is inactivated to minimize sex-related dosage differences of X-encoded genes in somatic cells of female placental mammals. The chain is E3 ubiquitin-protein ligase RLIM (RLIM) from Homo sapiens (Human).